The following is a 276-amino-acid chain: Cell division protein FtsQ (276 aa).

The Cytoplasmic segment spans residues 1–11 (MQYILKLKYYL). The helical transmembrane segment at 12-32 (YNITWKLVFICVMLVLLIVGI) threads the bilayer. Topologically, residues 33–276 (HKNIKWVCDY…NVSKGSHDYD (244 aa)) are periplasmic. The POTRA domain occupies 45-115 (GPLSYIIVTG…NTLKINLIEY (71 aa)).

The protein belongs to the FtsQ/DivIB family. FtsQ subfamily. As to quaternary structure, part of a complex composed of FtsB, FtsL and FtsQ.

It localises to the cell inner membrane. Essential cell division protein. May link together the upstream cell division proteins, which are predominantly cytoplasmic, with the downstream cell division proteins, which are predominantly periplasmic. May control correct divisome assembly. The protein is Cell division protein FtsQ of Blochmanniella floridana.